A 336-amino-acid chain; its full sequence is Serpentine receptor class gamma-9 (336 aa).

7 consecutive transmembrane segments (helical) span residues 30 to 50, 64 to 84, 111 to 131, 152 to 172, 200 to 220, 237 to 257, and 271 to 291; these read LLQA…LYVI, FVIY…DIFI, IYYP…IFLT, LSFI…NTII, FLFL…VIMF, LCLA…FEAL, and FLIQ…IMIF.

This sequence belongs to the nematode receptor-like protein srg family.

The protein resides in the membrane. This chain is Serpentine receptor class gamma-9 (srg-9), found in Caenorhabditis elegans.